A 356-amino-acid chain; its full sequence is Peptide chain release factor 1 (356 aa).

The residue at position 235 (Q235) is an N5-methylglutamine.

The protein belongs to the prokaryotic/mitochondrial release factor family. Methylated by PrmC. Methylation increases the termination efficiency of RF1.

The protein localises to the cytoplasm. Its function is as follows. Peptide chain release factor 1 directs the termination of translation in response to the peptide chain termination codons UAG and UAA. The protein is Peptide chain release factor 1 of Hydrogenobaculum sp. (strain Y04AAS1).